The chain runs to 597 residues: Elongation factor 4 (597 aa).

The 183-residue stretch at 2-184 (KNIRNFSIIA…RLVRDIPAPE (183 aa)) folds into the tr-type G domain. GTP is bound by residues 14–19 (DHGKST) and 131–134 (NKID).

It belongs to the TRAFAC class translation factor GTPase superfamily. Classic translation factor GTPase family. LepA subfamily.

The protein resides in the cell inner membrane. It catalyses the reaction GTP + H2O = GDP + phosphate + H(+). Its function is as follows. Required for accurate and efficient protein synthesis under certain stress conditions. May act as a fidelity factor of the translation reaction, by catalyzing a one-codon backward translocation of tRNAs on improperly translocated ribosomes. Back-translocation proceeds from a post-translocation (POST) complex to a pre-translocation (PRE) complex, thus giving elongation factor G a second chance to translocate the tRNAs correctly. Binds to ribosomes in a GTP-dependent manner. The sequence is that of Elongation factor 4 from Edwardsiella ictaluri (strain 93-146).